We begin with the raw amino-acid sequence, 931 residues long: Transportin (931 aa).

HEAT repeat units lie at residues glycine 10–aspartate 37, valine 42–glutamate 79, tyrosine 88–phenylalanine 121, leucine 127–aspartate 164, asparagine 171–isoleucine 201, phenylalanine 214–valine 241, lysine 253–alanine 280, proline 296–isoleucine 421, valine 430–alanine 459, serine 471–arginine 498, leucine 512–alanine 545, leucine 553–valine 586, glutamate 594–glycine 632, serine 640–threonine 693, leucine 704–leucine 735, proline 743–proline 776, valine 784–proline 819, aspartate 827–asparagine 860, and valine 869–methionine 900. Residues isoleucine 32–aspartate 99 enclose the Importin N-terminal domain. Positions aspartate 317–glutamate 401 are disordered. The span at aspartate 358–asparagine 381 shows a compositional bias: low complexity. A compositionally biased stretch (acidic residues) spans asparagine 382–glutamate 401.

It belongs to the importin beta family. Importin beta-2 subfamily. Forms a complex with an importin alpha subunit.

The protein resides in the cytoplasm. The protein localises to the nucleus envelope. In terms of biological role, functions in nuclear protein import via a substrate-importin alpha-beta transport complex that passes though the nuclear pore complexes (NPC). Mediates docking of the substrate-importin complex to distinct nucleoporins. The chain is Transportin (tnpo) from Dictyostelium discoideum (Social amoeba).